The following is a 177-amino-acid chain: Large ribosomal subunit protein uL6 (177 aa).

The protein belongs to the universal ribosomal protein uL6 family. As to quaternary structure, part of the 50S ribosomal subunit.

In terms of biological role, this protein binds to the 23S rRNA, and is important in its secondary structure. It is located near the subunit interface in the base of the L7/L12 stalk, and near the tRNA binding site of the peptidyltransferase center. This is Large ribosomal subunit protein uL6 from Brucella anthropi (strain ATCC 49188 / DSM 6882 / CCUG 24695 / JCM 21032 / LMG 3331 / NBRC 15819 / NCTC 12168 / Alc 37) (Ochrobactrum anthropi).